A 511-amino-acid chain; its full sequence is Light-independent protochlorophyllide reductase subunit B (511 aa).

Aspartate 36 contributes to the [4Fe-4S] cluster binding site. Residue aspartate 299 is the Proton donor of the active site. Residue 434–435 coordinates substrate; that stretch reads GM.

This sequence belongs to the ChlB/BchB/BchZ family. As to quaternary structure, protochlorophyllide reductase is composed of three subunits; ChlL, ChlN and ChlB. Forms a heterotetramer of two ChlB and two ChlN subunits. The cofactor is [4Fe-4S] cluster.

It localises to the plastid. Its subcellular location is the chloroplast. The catalysed reaction is chlorophyllide a + oxidized 2[4Fe-4S]-[ferredoxin] + 2 ADP + 2 phosphate = protochlorophyllide a + reduced 2[4Fe-4S]-[ferredoxin] + 2 ATP + 2 H2O. It functions in the pathway porphyrin-containing compound metabolism; chlorophyll biosynthesis (light-independent). Its function is as follows. Component of the dark-operative protochlorophyllide reductase (DPOR) that uses Mg-ATP and reduced ferredoxin to reduce ring D of protochlorophyllide (Pchlide) to form chlorophyllide a (Chlide). This reaction is light-independent. The NB-protein (ChlN-ChlB) is the catalytic component of the complex. This is Light-independent protochlorophyllide reductase subunit B from Huperzia lucidula (Shining clubmoss).